We begin with the raw amino-acid sequence, 1159 residues long: ATP-dependent helicase/deoxyribonuclease subunit B (1159 aa).

Residues 1–401 (MSIRFVYGRS…LLKNWSYESV (401 aa)) form the UvrD-like helicase ATP-binding domain. An ATP-binding site is contributed by 8 to 15 (GRSGTGKS). Residues 279 to 582 (PYRFKGNLEL…NIGDIARIKG (304 aa)) form the UvrD-like helicase C-terminal domain. Residues Cys-787, Cys-1106, Cys-1109, and Cys-1115 each contribute to the [4Fe-4S] cluster site.

Belongs to the helicase family. AddB/RexB type 1 subfamily. In terms of assembly, heterodimer of AddA and AddB. Mg(2+) serves as cofactor. It depends on [4Fe-4S] cluster as a cofactor.

Its function is as follows. The heterodimer acts as both an ATP-dependent DNA helicase and an ATP-dependent, dual-direction single-stranded exonuclease. Recognizes the chi site generating a DNA molecule suitable for the initiation of homologous recombination. The AddB subunit has 5' -&gt; 3' nuclease activity but not helicase activity. This Clostridium beijerinckii (strain ATCC 51743 / NCIMB 8052) (Clostridium acetobutylicum) protein is ATP-dependent helicase/deoxyribonuclease subunit B.